The primary structure comprises 732 residues: E3 ubiquitin-protein ligase TRIM56 (732 aa).

An RING-type zinc finger spans residues 21–60 (CKICLEQLRVPKTLPCLHTYCQDCLAQLAEGSRLRCPECR). Residues 164–205 (RQAAQCPQHPGEALRFLCQPCSQLLCRECRLDPHLDHPCLPL) form a B box-type zinc finger. The Zn(2+) site is built by Cys-169, His-172, Cys-192, and His-197. Residues 211–286 (ARRPGLEELL…LRAHVEAAEE (76 aa)) adopt a coiled-coil conformation. A compositionally biased stretch (basic and acidic residues) spans 374–384 (LPQKDSGKDGA). Residues 374-462 (LPQKDSGKDG…PAPGPNLEGS (89 aa)) form a disordered region. Residues 389–405 (GDATQPQSRDGVQTPNQ) are compositionally biased toward polar residues. The residue at position 402 (Thr-402) is a Phosphothreonine. Residues 407 to 416 (DGAKTPKESR) show a composition bias toward basic and acidic residues. Thr-419 is modified (phosphothreonine). Over residues 434-446 (SNKKRKFKGRLKS) the composition is skewed to basic residues. Ser-452 bears the Phosphoserine mark.

The protein belongs to the TRIM/RBCC family. As to quaternary structure, interacts with STING1. Interacts with TICAM1.

The protein localises to the cytoplasm. It carries out the reaction S-ubiquitinyl-[E2 ubiquitin-conjugating enzyme]-L-cysteine + [acceptor protein]-L-lysine = [E2 ubiquitin-conjugating enzyme]-L-cysteine + N(6)-ubiquitinyl-[acceptor protein]-L-lysine.. It functions in the pathway protein modification; protein ubiquitination. E3 ubiquitin-protein ligase that plays a key role in innate antiviral immunity by mediating ubiquitination of CGAS and STING1. In response to pathogen- and host-derived double-stranded DNA (dsDNA), targets STING1 to 'Lys-63'-linked ubiquitination, thereby promoting its homodimerization, a step required for the production of type I interferon IFN-beta. Also mediate monoubiquitination of CGAS, thereby promoting CGAS oligomerization and subsequent activation. Independently of its E3 ubiquitin ligase activity, positive regulator of TLR3 signaling. Potentiates extracellular double stranded RNA (dsRNA)-induced expression of IFNB1 and interferon-stimulated genes ISG15, IFIT1/ISG56, CXCL10, OASL and CCL5/RANTES. Restricts bovine viral diarrhea virus (BVDV) replication. The protein is E3 ubiquitin-protein ligase TRIM56 of Bos taurus (Bovine).